The primary structure comprises 378 residues: Putative glutamate--cysteine ligase 2 (378 aa).

It belongs to the glutamate--cysteine ligase type 2 family. YbdK subfamily.

It catalyses the reaction L-cysteine + L-glutamate + ATP = gamma-L-glutamyl-L-cysteine + ADP + phosphate + H(+). Its function is as follows. ATP-dependent carboxylate-amine ligase which exhibits weak glutamate--cysteine ligase activity. This chain is Putative glutamate--cysteine ligase 2, found in Bdellovibrio bacteriovorus (strain ATCC 15356 / DSM 50701 / NCIMB 9529 / HD100).